The primary structure comprises 320 residues: MSFASETKKELTNLEVKHCCLRAELSALLRMNGSLSFSGGRMTVDVQTENAAIARRIYMLLRKGYDVAVELFVRKKMRLKKNNVYIVRITDGAASLLRELYIWNGDFSFVHDISPELIKKKCCKRSYLRGAFLAGGSVNNPETSSYHLEIFSLYEEHNRSLCELMNSHFFLNAKTLERKKGFITYLKEAEKIAEFLNIIGAHQALLRFEDIRIVRDMRNSVNRLVNCETANLNKTIGAALRQVENIRYIDETIGLDSLPAKLREIAKLRIEHQDVTLKELGEMVAGGKISKSGINHRLRKIDEIAERLRAGKPVDFHKSL.

Residues 276–310 (TLKELGEMVAGGKISKSGINHRLRKIDEIAERLRA) constitute a DNA-binding region (H-T-H motif).

The protein belongs to the WhiA family.

Its function is as follows. Involved in cell division and chromosome segregation. The polypeptide is Probable cell division protein WhiA (Geobacillus thermodenitrificans (strain NG80-2)).